The chain runs to 317 residues: Carbonic anhydrase 5B, mitochondrial (317 aa).

The transit peptide at 1–33 (MAVMNHLRVILQVSSSTLPWRRCWVPRLVPRRS) directs the protein to the mitochondrion. Positions 37 to 296 (YTCTYRTRNR…LMNRTVRSSF (260 aa)) constitute an Alpha-carbonic anhydrase domain. Zn(2+) is bound by residues histidine 130, histidine 132, and histidine 155. A substrate-binding site is contributed by 235 to 236 (TT).

This sequence belongs to the alpha-carbonic anhydrase family. It depends on Zn(2+) as a cofactor. Expressed in the heart, liver, lung, kidney, testis, and skeletal muscle (at protein level).

The protein localises to the mitochondrion. It carries out the reaction hydrogencarbonate + H(+) = CO2 + H2O. Its function is as follows. Mitochondrial carbonic anhydrase that catalyzes the reversible conversion of carbon dioxide to bicarbonate/HCO3. The chain is Carbonic anhydrase 5B, mitochondrial (Ca5b) from Mus musculus (Mouse).